The sequence spans 155 residues: MYDKFMIYLHLNGLHGEAKYYKYLMSQMDFENQVADEIKRFCETRLKPAISCNTLTAESLNTLVDSVVCKNGLLNPYAKEVQFALQYLFDDDEISKRDQDGFKLFLLHNYDRCENMEEYFLINNFSIADYEFEDMFEIVRIDCRDLLLLLAKYNM.

This is an uncharacterized protein from Autographa californica nuclear polyhedrosis virus (AcMNPV).